The following is a 431-amino-acid chain: MVKGTLYTYPENFRAYKALIAAQYSGAQVKVADNFKFGETNKSAEFLKKFPGGKVPAFETAEGQYLSESNAIAYLLANEQLRGGKCPFVQAQVQQWISFADNEIVPASCAWVFPLLGILPQQKNSTAKQEAEAVLQQLNQKLQDATFLAGERITLADIVVFSSLLHLYEYVLEPSVRSAFGNVNRWFVTILNQKQVQAVVKDYKLCEKALVFDPKKYAEFQAKTGAAKPQQQAQQQKQEKKPKEKKEAPKKAAEPAEELDAADEALAAEPKSKDPFDALPKGTFNFDDFKRVYSNEDEAKSIPYFFDKFDAENYSIWFGEYKYNEELSKVFMSCNLITGMFQRLDKMRKAAFASVCLFGEDGNSTISGIWVWRGQDLAFTLSPDWQIDYEVYDWKKLDAKSEETKKLVTQYFSWSGTDKDGRKFNQGKIFK.

Residues 2-84 form the GST N-terminal domain; sequence VKGTLYTYPE…LLANEQLRGG (83 aa). One can recognise a GST C-terminal domain in the interval 86–212; the sequence is CPFVQAQVQQ…YKLCEKALVF (127 aa). The interval 223–261 is disordered; that stretch reads KTGAAKPQQQAQQQKQEKKPKEKKEAPKKAAEPAEELDA. Positions 226 to 236 are enriched in low complexity; it reads AAKPQQQAQQQ. Basic and acidic residues predominate over residues 237 to 254; that stretch reads KQEKKPKEKKEAPKKAAE. The EF-1-gamma C-terminal domain maps to 272–431; the sequence is SKDPFDALPK…RKFNQGKIFK (160 aa). S294 carries the post-translational modification Phosphoserine.

Interacts with microtubules. May interact with BicDR; the interaction is probably indirect. Interacts (via C-terminus) with Doa; the interaction is probably direct, is transient and leads to phosphorylation of eEF1gamma by Doa. EF-1 is composed of four subunits: alpha, beta, delta, and gamma. Phosphorylated on Ser-294 by LAMMER kinases, including Doa. Phosphorylation on Ser-294 by Doa is required for negative regulation of microtubule-based transport.

The protein resides in the cytoplasm. The protein localises to the nucleus. It is found in the cytoskeleton. In terms of biological role, microtubule binding protein involved in regulation of microtubule-based transport. Probably plays a role in anchoring the EF-1 complex to other cellular components. Probably involved in formation and/or development of mechanosensory organs during metamorphosis. Required for cellular and organismal viability. Not essential for the innate immune response to bacterial infection. The polypeptide is Elongation factor 1-gamma (Drosophila melanogaster (Fruit fly)).